The chain runs to 246 residues: Proteasome subunit alpha (246 aa).

Belongs to the peptidase T1A family. In terms of assembly, the 20S proteasome core is composed of 14 alpha and 14 beta subunits that assemble into four stacked heptameric rings, resulting in a barrel-shaped structure. The two inner rings, each composed of seven catalytic beta subunits, are sandwiched by two outer rings, each composed of seven alpha subunits. The catalytic chamber with the active sites is on the inside of the barrel. Has a gated structure, the ends of the cylinder being occluded by the N-termini of the alpha-subunits. Is capped at one or both ends by the proteasome regulatory ATPase, PAN.

It localises to the cytoplasm. The formation of the proteasomal ATPase PAN-20S proteasome complex, via the docking of the C-termini of PAN into the intersubunit pockets in the alpha-rings, triggers opening of the gate for substrate entry. Interconversion between the open-gate and close-gate conformations leads to a dynamic regulation of the 20S proteasome proteolysis activity. Functionally, component of the proteasome core, a large protease complex with broad specificity involved in protein degradation. The protein is Proteasome subunit alpha of Methanopyrus kandleri (strain AV19 / DSM 6324 / JCM 9639 / NBRC 100938).